The following is a 401-amino-acid chain: 8-amino-7-oxononanoate synthase (401 aa).

Arginine 19 provides a ligand contact to substrate. 106 to 107 (GY) lines the pyridoxal 5'-phosphate pocket. Histidine 131 lines the substrate pocket. 3 residues coordinate pyridoxal 5'-phosphate: serine 176, histidine 204, and threonine 233. Lysine 236 carries the N6-(pyridoxal phosphate)lysine modification. Threonine 350 is a binding site for substrate.

Belongs to the class-II pyridoxal-phosphate-dependent aminotransferase family. BioF subfamily. In terms of assembly, homodimer. Pyridoxal 5'-phosphate serves as cofactor.

The enzyme catalyses 6-carboxyhexanoyl-[ACP] + L-alanine + H(+) = (8S)-8-amino-7-oxononanoate + holo-[ACP] + CO2. The protein operates within cofactor biosynthesis; biotin biosynthesis. Catalyzes the decarboxylative condensation of pimeloyl-[acyl-carrier protein] and L-alanine to produce 8-amino-7-oxononanoate (AON), [acyl-carrier protein], and carbon dioxide. This Pseudomonas paraeruginosa (strain DSM 24068 / PA7) (Pseudomonas aeruginosa (strain PA7)) protein is 8-amino-7-oxononanoate synthase.